A 373-amino-acid polypeptide reads, in one-letter code: DNA replication and repair protein RecF (373 aa).

ATP is bound at residue 30-37; the sequence is GANGSGKT.

The protein belongs to the RecF family.

Its subcellular location is the cytoplasm. The RecF protein is involved in DNA metabolism; it is required for DNA replication and normal SOS inducibility. RecF binds preferentially to single-stranded, linear DNA. It also seems to bind ATP. This Marinobacter nauticus (strain ATCC 700491 / DSM 11845 / VT8) (Marinobacter aquaeolei) protein is DNA replication and repair protein RecF.